A 105-amino-acid chain; its full sequence is uncharacterized protein (105 aa).

The segment covering 1-11 (MPHRNDRRKSA) has biased composition (basic residues). Positions 1 to 20 (MPHRNDRRKSASKAPNAIIH) are disordered.

This sequence belongs to the ALB1 family.

Its subcellular location is the nucleus. The protein localises to the nucleolus. This is an uncharacterized protein from Schizosaccharomyces pombe (strain 972 / ATCC 24843) (Fission yeast).